A 370-amino-acid polypeptide reads, in one-letter code: Cytochrome b (370 aa).

4 helical membrane-spanning segments follow: residues 25–45, 69–90, 105–125, and 170–190; these read FGSM…FLAI, WIMQ…YTHI, WLSG…GYVL, and FFAL…IHIV. Heme b contacts are provided by His-75 and His-89. Positions 174 and 188 each coordinate heme b. His-193 contacts a ubiquinone. 4 helical membrane-spanning segments follow: residues 218-238, 280-300, 312-332, and 339-358; these read YKDM…MSFM, LGGT…PFTH, LTQI…WTAT, and FITI…IINP.

This sequence belongs to the cytochrome b family. In terms of assembly, the cytochrome bc1 complex contains 3 respiratory subunits (MT-CYB, CYC1 and UQCRFS1), 2 core proteins (UQCRC1 and UQCRC2) and probably 6 low-molecular weight proteins. It depends on heme b as a cofactor.

It is found in the mitochondrion inner membrane. Component of the ubiquinol-cytochrome c reductase complex (complex III or cytochrome b-c1 complex) that is part of the mitochondrial respiratory chain. The b-c1 complex mediates electron transfer from ubiquinol to cytochrome c. Contributes to the generation of a proton gradient across the mitochondrial membrane that is then used for ATP synthesis. This is Cytochrome b (MT-CYB) from Micropechis ikaheca (New Guinean small-eyed snake).